The sequence spans 155 residues: MLCRTNVLHLRPQLNKFTYLTQFLWLCLFYITFYFVLYSVLVFTNTEWPFILLKKRLVSQEKIRAYQSNDCVGQTRGLTSEPSWRDACWRALILAYLTSIYFFPILGSFPRVLKDQVDFGYIPTVCILLYVIFLFFFDSYRKSLFTTALTHSFWL.

A run of 3 helical transmembrane segments spans residues 23–43, 89–109, and 117–137; these read FLWL…VLVF, WRAL…LGSF, and VDFG…LFFF.

This sequence belongs to the ATPase protein YMF19 family.

It is found in the mitochondrion membrane. The sequence is that of Putative ATP synthase protein YMF19-like protein (YMF18) from Marchantia polymorpha (Common liverwort).